Reading from the N-terminus, the 273-residue chain is Dermonecrotic toxin LapSicTox-alphaIB1ai (273 aa).

Histidine 5 is an active-site residue. Residues glutamate 25 and aspartate 27 each coordinate Mg(2+). Catalysis depends on histidine 41, which acts as the Nucleophile. Intrachain disulfides connect cysteine 45-cysteine 51 and cysteine 47-cysteine 190. Aspartate 85 lines the Mg(2+) pocket. The N-linked (GlcNAc...) asparagine glycan is linked to asparagine 250.

The protein belongs to the arthropod phospholipase D family. Class II subfamily. Mg(2+) is required as a cofactor. As to expression, expressed by the venom gland.

It localises to the secreted. The catalysed reaction is an N-(acyl)-sphingosylphosphocholine = an N-(acyl)-sphingosyl-1,3-cyclic phosphate + choline. It carries out the reaction an N-(acyl)-sphingosylphosphoethanolamine = an N-(acyl)-sphingosyl-1,3-cyclic phosphate + ethanolamine. It catalyses the reaction a 1-acyl-sn-glycero-3-phosphocholine = a 1-acyl-sn-glycero-2,3-cyclic phosphate + choline. The enzyme catalyses a 1-acyl-sn-glycero-3-phosphoethanolamine = a 1-acyl-sn-glycero-2,3-cyclic phosphate + ethanolamine. In terms of biological role, dermonecrotic toxins cleave the phosphodiester linkage between the phosphate and headgroup of certain phospholipids (sphingolipid and lysolipid substrates), forming an alcohol (often choline) and a cyclic phosphate. This toxin acts on sphingomyelin (SM). It may also act on ceramide phosphoethanolamine (CPE), lysophosphatidylcholine (LPC) and lysophosphatidylethanolamine (LPE), but not on lysophosphatidylserine (LPS), and lysophosphatidylglycerol (LPG). It acts by transphosphatidylation, releasing exclusively cyclic phosphate products as second products. Induces dermonecrosis, hemolysis, increased vascular permeability, edema, inflammatory response, and platelet aggregation. This is Dermonecrotic toxin LapSicTox-alphaIB1ai from Loxosceles apachea (Apache recluse spider).